Consider the following 211-residue polypeptide: Holliday junction resolvase RecU (211 aa).

4 residues coordinate Mg(2+): Thr95, Asp97, Glu110, and Gln129.

This sequence belongs to the RecU family. The cofactor is Mg(2+).

The protein resides in the cytoplasm. It carries out the reaction Endonucleolytic cleavage at a junction such as a reciprocal single-stranded crossover between two homologous DNA duplexes (Holliday junction).. Endonuclease that resolves Holliday junction intermediates in genetic recombination. Cleaves mobile four-strand junctions by introducing symmetrical nicks in paired strands. Promotes annealing of linear ssDNA with homologous dsDNA. Required for DNA repair, homologous recombination and chromosome segregation. This is Holliday junction resolvase RecU from Lactobacillus acidophilus (strain ATCC 700396 / NCK56 / N2 / NCFM).